A 42-amino-acid chain; its full sequence is Photosystem I reaction center subunit IX (42 aa).

The helical transmembrane segment at 7–27 (FLSSAPVLIMALLTFTAGILI) threads the bilayer.

This sequence belongs to the PsaJ family.

The protein resides in the cellular thylakoid membrane. Its function is as follows. May help in the organization of the PsaE and PsaF subunits. This is Photosystem I reaction center subunit IX from Microcystis aeruginosa (strain NIES-843 / IAM M-2473).